We begin with the raw amino-acid sequence, 87 residues long: Alpha-toxin To2 (87 aa).

The signal sequence occupies residues 1-20 (MIRFVLFISCFFLIGTVVEC). The region spanning 22–84 (KDGYLMEGDG…IWDSKNNKCG (63 aa)) is the LCN-type CS-alpha/beta domain. 4 disulfide bridges follow: C32-C83, C36-C58, C44-C64, and C48-C66. The residue at position 85 (K85) is a Lysine amide.

In terms of tissue distribution, expressed by the venom gland.

It is found in the secreted. In terms of biological role, alpha toxins bind voltage-independently at site-3 of sodium channels (Nav) and inhibit the inactivation of the activated channels, thereby blocking neuronal transmission. Affects the tetrodotoxin-sensitive sodium current permeability of F-11 rat neuroblastoma cells. Produces a dose dependent increase in amplitude and duration of the current. The protein is Alpha-toxin To2 of Tityus obscurus (Amazonian scorpion).